Here is a 223-residue protein sequence, read N- to C-terminus: tRNA (guanine-N(7)-)-methyltransferase (223 aa).

S-adenosyl-L-methionine contacts are provided by D56, D81, D108, and D130. The active site involves D130. Residues K134 and D166 each contribute to the substrate site.

Belongs to the class I-like SAM-binding methyltransferase superfamily. TrmB family.

The enzyme catalyses guanosine(46) in tRNA + S-adenosyl-L-methionine = N(7)-methylguanosine(46) in tRNA + S-adenosyl-L-homocysteine. Its pathway is tRNA modification; N(7)-methylguanine-tRNA biosynthesis. In terms of biological role, catalyzes the formation of N(7)-methylguanine at position 46 (m7G46) in tRNA. The sequence is that of tRNA (guanine-N(7)-)-methyltransferase from Rubrobacter xylanophilus (strain DSM 9941 / JCM 11954 / NBRC 16129 / PRD-1).